A 152-amino-acid polypeptide reads, in one-letter code: Ubiquitin-conjugating enzyme E2 1 (152 aa).

Residues 4–150 enclose the UBC core domain; sequence PARKRLMRDF…VRDVVEQSWT (147 aa). Catalysis depends on Cys-88, which acts as the Glycyl thioester intermediate. Positions 119–152 are disordered; it reads NSPANSEAARMYSESKREYNRRVRDVVEQSWTAD. Over residues 131 to 145 the composition is skewed to basic and acidic residues; that stretch reads SESKREYNRRVRDVV.

The protein belongs to the ubiquitin-conjugating enzyme family. Ubiquitously expressed.

The enzyme catalyses S-ubiquitinyl-[E1 ubiquitin-activating enzyme]-L-cysteine + [E2 ubiquitin-conjugating enzyme]-L-cysteine = [E1 ubiquitin-activating enzyme]-L-cysteine + S-ubiquitinyl-[E2 ubiquitin-conjugating enzyme]-L-cysteine.. It participates in protein modification; protein ubiquitination. In terms of biological role, accepts the ubiquitin from the E1 complex and catalyzes its covalent attachment to other proteins. This is Ubiquitin-conjugating enzyme E2 1 (UBC1) from Arabidopsis thaliana (Mouse-ear cress).